The chain runs to 71 residues: Large ribosomal subunit protein eL38 (71 aa).

Belongs to the eukaryotic ribosomal protein eL38 family.

This chain is Large ribosomal subunit protein eL38 (RpL38), found in Argas monolakensis (Mono lake bird tick).